A 192-amino-acid chain; its full sequence is Phosphoheptose isomerase (192 aa).

An SIS domain is found at 37 to 192 (LADSFKAGGK…IQLIEKEMVK (156 aa)). 52 to 54 (NGG) contributes to the substrate binding site. 2 residues coordinate Zn(2+): H61 and E65. Substrate-binding positions include E65, 93–94 (ND), 119–121 (STS), S124, and Q172. Zn(2+)-binding residues include Q172 and H180.

This sequence belongs to the SIS family. GmhA subfamily. Homotetramer. Requires Zn(2+) as cofactor.

The protein resides in the cytoplasm. The enzyme catalyses 2 D-sedoheptulose 7-phosphate = D-glycero-alpha-D-manno-heptose 7-phosphate + D-glycero-beta-D-manno-heptose 7-phosphate. The protein operates within carbohydrate biosynthesis; D-glycero-D-manno-heptose 7-phosphate biosynthesis; D-glycero-alpha-D-manno-heptose 7-phosphate and D-glycero-beta-D-manno-heptose 7-phosphate from sedoheptulose 7-phosphate: step 1/1. Catalyzes the isomerization of sedoheptulose 7-phosphate in D-glycero-D-manno-heptose 7-phosphate. The sequence is that of Phosphoheptose isomerase from Enterobacter sp. (strain 638).